A 264-amino-acid polypeptide reads, in one-letter code: Na(+)-translocating NADH-quinone reductase subunit E (264 aa).

6 helical membrane-spanning segments follow: residues 11–31 (VFGI…NFLG), 50–70 (MSVA…HTFI), 90–110 (FLEL…LELL), 123–143 (GIFL…LFGI), 149–169 (FIPM…AIVL), and 189–209 (MGIS…LTGI).

This sequence belongs to the NqrDE/RnfAE family. Composed of six subunits; NqrA, NqrB, NqrC, NqrD, NqrE and NqrF.

The protein resides in the cell inner membrane. The catalysed reaction is a ubiquinone + n Na(+)(in) + NADH + H(+) = a ubiquinol + n Na(+)(out) + NAD(+). NQR complex catalyzes the reduction of ubiquinone-1 to ubiquinol by two successive reactions, coupled with the transport of Na(+) ions from the cytoplasm to the periplasm. NqrA to NqrE are probably involved in the second step, the conversion of ubisemiquinone to ubiquinol. This is Na(+)-translocating NADH-quinone reductase subunit E from Chlamydia caviae (strain ATCC VR-813 / DSM 19441 / 03DC25 / GPIC) (Chlamydophila caviae).